The primary structure comprises 112 residues: ATP synthase epsilon chain (112 aa).

It belongs to the ATPase epsilon chain family. As to quaternary structure, F-type ATPases have 2 components, CF(1) - the catalytic core - and CF(0) - the membrane proton channel. CF(1) has five subunits: alpha(3), beta(3), gamma(1), delta(1), epsilon(1). CF(0) has three main subunits: a, b and c.

It is found in the cell inner membrane. Its function is as follows. Produces ATP from ADP in the presence of a proton gradient across the membrane. The chain is ATP synthase epsilon chain (atpC) from Rickettsia prowazekii (strain Madrid E).